Consider the following 270-residue polypeptide: Diaminopimelate epimerase (270 aa).

Residues Asn-15, Gln-49, and Asn-66 each contribute to the substrate site. The active-site Proton donor is Cys-75. Substrate contacts are provided by residues 76 to 77, Asn-155, Asn-187, and 204 to 205; these read GN and ER. Cys-213 acts as the Proton acceptor in catalysis. Residue 214–215 coordinates substrate; sequence GS.

Belongs to the diaminopimelate epimerase family. Homodimer.

It is found in the cytoplasm. It carries out the reaction (2S,6S)-2,6-diaminopimelate = meso-2,6-diaminopimelate. The protein operates within amino-acid biosynthesis; L-lysine biosynthesis via DAP pathway; DL-2,6-diaminopimelate from LL-2,6-diaminopimelate: step 1/1. Catalyzes the stereoinversion of LL-2,6-diaminopimelate (L,L-DAP) to meso-diaminopimelate (meso-DAP), a precursor of L-lysine and an essential component of the bacterial peptidoglycan. The protein is Diaminopimelate epimerase of Rickettsia massiliae (strain Mtu5).